Here is a 269-residue protein sequence, read N- to C-terminus: Glutamate racemase (269 aa).

Substrate-binding positions include 14–15 (DS) and 46–47 (YS). Residue Cys78 is the Proton donor/acceptor of the active site. Residue 79–80 (NT) coordinates substrate. Cys189 functions as the Proton donor/acceptor in the catalytic mechanism. 190–191 (TH) provides a ligand contact to substrate.

It belongs to the aspartate/glutamate racemases family.

The enzyme catalyses L-glutamate = D-glutamate. It participates in cell wall biogenesis; peptidoglycan biosynthesis. Its function is as follows. Provides the (R)-glutamate required for cell wall biosynthesis. The sequence is that of Glutamate racemase from Haemophilus influenzae (strain PittGG).